A 1291-amino-acid chain; its full sequence is MTEKITLADALSNVEVLDELSLPDEQPCIEAQPCSIIYKANFDTNFEDRNGFVTGIAKYIEEATTHANLNVLLDEGQKHAVMLYTWRCCSRAIPQPKSNEQPNRVEIYEKTVEVLAPEVNKLLNFMYFQRKAIEAFSGEVKRLCHAEKRKDFVSEAYLLTLGKFINMFAVLDELKNMKSSVKNDYSTYRRAAQFLKVMSDSHTLQESQNLSMFLATQNKIRDTVKDTLEKIVGYEDLLSDVVNICVHMFETKMYLTPEEKHMLVKVMGFGLFLMDSDACNINKLDQKKKIRLDRIDRIFKNLEVVPLFGDMQIAPFNYIKRSKHFDSSKWPLSSSNAISPQADLMVHLPQIREDHVKYISELARYTNEVTTTVKENPSDAENRITADLALRGLQLLSEWTSVVTELYSWKLLHPTDHHQNKECPVEAEEYERATRYNYTSEEKFALIEVIAMIKGLQVLMARIETVLCEAIRRNIYSELQDFVQLSLREPLRKAVKNKKDLIRSIIMSVRETSADWQKGYEPTDDPVSKGKKDPDGGFRIHVPRLNVGPSSTQLYMVRTMLESLTADKSGGKRTLRKDIDGNCLMQIETFHNTSFYWSYLLNFSDTLQKCCDLSQLWYREFYLEMTMGRKVNKCMVRHQHNEECKDLITMEKRIQFPIEMSMPWILTDHILQTKEPSMMEFVLYPLDLYNDSAHYALTVFRKQFLYDEVEAEVNLCFDQFVYKLSEQIFAHYKQLAGSIFLDKRFRLECEVLGFNFQSYPRNNRYETLLKQRHVQLLGRSIDLNKLVTQRINANMHKSIELAISRFEANDITGIVELEGLLEANRICHKLLSKYLALDNFDGMVKEANHNVLAPYGRITLHVFVELNYDFLVNYCYNAATNRFIRTKVNLSSTQAIQREKPPQMSHYYLWGSKQLNAAYSTQYGQYTGFVGSPHFHAMCRLLGYQGIAVVMDIILKDIVKPLIQGSLLQFTKTLMIAMPKSCKLPRCEYGSPGVLSYYQAHLTDIVQYPDTKTELFQSFREFGNCIIFCLLIEQALSQEEVCDLLHAALFQNIFPRPFCKENEKPEAKQKRLEAQFANLQIVSNVEKIGTAKQAMIAREGDLLTRERLCCGLSIFEVILNRVKSYLDDPVWCGPPPANGIIHVDECSEFHRLWSALQFVYCIPVRGTEYTIEELFGEGLNWAGCVMIVLLGQQRRFEALDFCYHILRVQRVDGKDEDVKGIQLKRMVDRIRRFQVLNSQIFSILNKYLKGGDGEGSNVEHVRCFPPPQHPSVISSSSHYQDPQKLRQSMNN.

Residues 1269–1291 (HPSVISSSSHYQDPQKLRQSMNN) are disordered. A compositionally biased stretch (polar residues) spans 1271 to 1291 (SVISSSSHYQDPQKLRQSMNN).

Belongs to the CYFIP family. In terms of assembly, interacts with Fmr1 and Rac1. Component of the WAVE complex composed of Hem/Kette, Scar/Wave and Cyfip where it binds through its C-terminus directly to Hem.

It is found in the cytoplasm. Functionally, plays a role in guidance and morphology of central and peripheral axons and in synaptic morphology. Also required for formation of cell membrane protrusions and for bristle development. In Drosophila pseudoobscura pseudoobscura (Fruit fly), this protein is Cytoplasmic FMR1-interacting protein.